The chain runs to 131 residues: Phosphomevalonate dehydratase small subunit (131 aa).

The Proton acceptor role is filled by Ser-62.

This sequence belongs to the AcnX type II small subunit family. As to quaternary structure, heterodimer composed of a large subunit (PMDh-L) and a small subunit (PMDh-S).

It catalyses the reaction (R)-5-phosphomevalonate = (2E)-3-methyl-5-phosphooxypent-2-enoate + H2O. The protein operates within isoprenoid biosynthesis; isopentenyl diphosphate biosynthesis via mevalonate pathway. In terms of biological role, component of a hydro-lyase that catalyzes the dehydration of mevalonate 5-phosphate (MVA5P) to form trans-anhydromevalonate 5-phosphate (tAHMP). Involved in the archaeal mevalonate (MVA) pathway, which provides fundamental precursors for isoprenoid biosynthesis, such as isopentenyl diphosphate (IPP) and dimethylallyl diphosphate (DMAPP). The chain is Phosphomevalonate dehydratase small subunit from Thermococcus gammatolerans (strain DSM 15229 / JCM 11827 / EJ3).